A 404-amino-acid polypeptide reads, in one-letter code: tRNA/tmRNA (uracil-C(5))-methyltransferase (404 aa).

S-adenosyl-L-methionine is bound by residues Gln218, Tyr251, Asn256, Glu272, and Asp332. Cys358 functions as the Nucleophile in the catalytic mechanism. Glu392 (proton acceptor) is an active-site residue.

It belongs to the class I-like SAM-binding methyltransferase superfamily. RNA M5U methyltransferase family. TrmA subfamily.

The enzyme catalyses uridine(54) in tRNA + S-adenosyl-L-methionine = 5-methyluridine(54) in tRNA + S-adenosyl-L-homocysteine + H(+). The catalysed reaction is uridine(341) in tmRNA + S-adenosyl-L-methionine = 5-methyluridine(341) in tmRNA + S-adenosyl-L-homocysteine + H(+). Its function is as follows. Dual-specificity methyltransferase that catalyzes the formation of 5-methyluridine at position 54 (m5U54) in all tRNAs, and that of position 341 (m5U341) in tmRNA (transfer-mRNA). The protein is tRNA/tmRNA (uracil-C(5))-methyltransferase of Helicobacter hepaticus (strain ATCC 51449 / 3B1).